A 1025-amino-acid chain; its full sequence is Multidrug resistance protein MdtC (1025 aa).

A run of 12 helical transmembrane segments spans residues Phe-3–Leu-23, Glu-333–Leu-353, Ile-360–Cys-380, Leu-387–Leu-407, Val-431–Leu-451, Phe-463–Pro-483, Leu-528–Pro-548, Val-853–Ser-873, Val-875–Leu-895, Leu-897–Val-917, Pro-953–Gly-973, and Ile-984–Val-1004.

The protein belongs to the resistance-nodulation-cell division (RND) (TC 2.A.6) family. MdtC subfamily. As to quaternary structure, part of a tripartite efflux system composed of MdtA, MdtB and MdtC. MdtC forms a heteromultimer with MdtB.

It is found in the cell inner membrane. Functionally, the MdtABC tripartite complex confers resistance against novobiocin and deoxycholate. The protein is Multidrug resistance protein MdtC of Escherichia coli O157:H7 (strain EC4115 / EHEC).